Here is a 478-residue protein sequence, read N- to C-terminus: Putative malate transporter YflS (478 aa).

12 helical membrane-spanning segments follow: residues 12-31 (AVKL…IWFI), 41-57 (AWHL…GFIS), 64-81 (AIAI…TLSI), 96-118 (IVIA…ISYV), 187-209 (GFQG…PLIA), 222-244 (WTSW…PLVI), 277-296 (LSMV…GGSF), 300-319 (ATTT…VLTW), 332-354 (LTWF…VSWF), 364-386 (GFSW…YFFA), 398-420 (AFLA…LAFI), and 450-472 (WSIG…GLWW).

The protein belongs to the SLC13A/DASS transporter (TC 2.A.47) family. DIT1 subfamily.

It is found in the cell membrane. Might be a malate transporter. The protein is Putative malate transporter YflS (yflS) of Bacillus subtilis (strain 168).